A 244-amino-acid chain; its full sequence is Cobalt transport protein CbiM (244 aa).

An N-terminal signal peptide occupies residues 1–28 (MKKLWKFIPFVLMGVIYFTLTNPESAHA). 6 helical membrane passes run 37-57 (PVKWAVFWLIVFIPFLVLGLI), 71-91 (LLLALCAAFIFVLSALKIPSV), 103-123 (LATVMFGPLVVSVLGVIVLLF), 135-155 (TLGANAMSMAVIGPMVGFVVY), 166-186 (SVSIFLCAMTADLATYFTTSV), and 206-226 (FMAIFCVTQVPIAIAEGLLTV).

The protein belongs to the CbiM family. Forms an energy-coupling factor (ECF) transporter complex composed of an ATP-binding protein (A component, CbiO), a transmembrane protein (T component, CbiQ) and 2 possible substrate-capture proteins (S components, CbiM and CbiN) of unknown stoichimetry.

It localises to the cell membrane. Its pathway is cofactor biosynthesis; adenosylcobalamin biosynthesis. Its function is as follows. Part of the energy-coupling factor (ECF) transporter complex CbiMNOQ involved in cobalt import. This is Cobalt transport protein CbiM from Listeria seeligeri serovar 1/2b (strain ATCC 35967 / DSM 20751 / CCM 3970 / CCUG 15530 / CIP 100100 / LMG 11386 / NCTC 11856 / SLCC 3954 / 1120).